The following is a 443-amino-acid chain: ATP synthase subunit b-delta (443 aa).

Positions 1 to 168 (MSTFIGQLIG…PSDAALDDAV (168 aa)) are ATP synthase subunit b. The helical transmembrane segment at 4-24 (FIGQLIGFAVIVFLLVRFVVP) threads the bilayer. Residues 169–443 (GSRMRSTSRE…LASAETQLPD (275 aa)) are ATP synthase subunit delta.

This sequence in the N-terminal section; belongs to the ATPase B chain family. It in the C-terminal section; belongs to the ATPase delta chain family. F-type ATPases have 2 components, F(1) - the catalytic core - and F(0) - the membrane proton channel. F(1) has five subunits: alpha(3), beta(3), gamma(1), delta(1), epsilon(1). F(0) has three main subunits: a(1), b(2) and c(10-14). The alpha and beta chains form an alternating ring which encloses part of the gamma chain. F(1) is attached to F(0) by a central stalk formed by the gamma and epsilon chains, while a peripheral stalk is formed by the delta and b chains.

It is found in the cell membrane. F(1)F(0) ATP synthase produces ATP from ADP in the presence of a proton or sodium gradient. F-type ATPases consist of two structural domains, F(1) containing the extramembraneous catalytic core and F(0) containing the membrane proton channel, linked together by a central stalk and a peripheral stalk. During catalysis, ATP synthesis in the catalytic domain of F(1) is coupled via a rotary mechanism of the central stalk subunits to proton translocation. Its function is as follows. This fusion protein includes a component of the F(0) channel (subunit b) and of the F(1) subunit (subunit delta). Two copies of subunit b and one of delta together form the peripheral 'stator' stalk which links F(1) to F(0). This Mycobacterium sp. (strain JLS) protein is ATP synthase subunit b-delta (atpFH).